Here is a 330-residue protein sequence, read N- to C-terminus: Aspartate--ammonia ligase (330 aa).

This sequence belongs to the class-II aminoacyl-tRNA synthetase family. AsnA subfamily.

The protein localises to the cytoplasm. The enzyme catalyses L-aspartate + NH4(+) + ATP = L-asparagine + AMP + diphosphate + H(+). The protein operates within amino-acid biosynthesis; L-asparagine biosynthesis; L-asparagine from L-aspartate (ammonia route): step 1/1. The protein is Aspartate--ammonia ligase of Streptococcus pyogenes serotype M49 (strain NZ131).